The chain runs to 100 residues: Urease subunit gamma (100 aa).

Belongs to the urease gamma subunit family. As to quaternary structure, heterotrimer of UreA (gamma), UreB (beta) and UreC (alpha) subunits. Three heterotrimers associate to form the active enzyme.

It is found in the cytoplasm. It catalyses the reaction urea + 2 H2O + H(+) = hydrogencarbonate + 2 NH4(+). Its pathway is nitrogen metabolism; urea degradation; CO(2) and NH(3) from urea (urease route): step 1/1. This is Urease subunit gamma from Picosynechococcus sp. (strain ATCC 27264 / PCC 7002 / PR-6) (Agmenellum quadruplicatum).